Reading from the N-terminus, the 664-residue chain is Phosphomethylpyrimidine synthase (664 aa).

Composition is skewed to polar residues over residues 1–10 (MSTEPLSINP) and 17–27 (SATQEPSTSSK). The disordered stretch occupies residues 1 to 37 (MSTEPLSINPLSAKPLSATQEPSTSSKPSRREQRAAA). Residues Asn261, Met290, Tyr319, His355, 375 to 377 (SRG), 416 to 419 (DGLR), and Glu455 contribute to the substrate site. Zn(2+) is bound at residue His459. Tyr482 contributes to the substrate binding site. A Zn(2+)-binding site is contributed by His523. [4Fe-4S] cluster is bound by residues Cys603, Cys606, and Cys611.

It belongs to the ThiC family. As to quaternary structure, homodimer. The cofactor is [4Fe-4S] cluster.

It carries out the reaction 5-amino-1-(5-phospho-beta-D-ribosyl)imidazole + S-adenosyl-L-methionine = 4-amino-2-methyl-5-(phosphooxymethyl)pyrimidine + CO + 5'-deoxyadenosine + formate + L-methionine + 3 H(+). The protein operates within cofactor biosynthesis; thiamine diphosphate biosynthesis. Catalyzes the synthesis of the hydroxymethylpyrimidine phosphate (HMP-P) moiety of thiamine from aminoimidazole ribotide (AIR) in a radical S-adenosyl-L-methionine (SAM)-dependent reaction. This is Phosphomethylpyrimidine synthase from Pectobacterium atrosepticum (strain SCRI 1043 / ATCC BAA-672) (Erwinia carotovora subsp. atroseptica).